The primary structure comprises 290 residues: 4-hydroxy-tetrahydrodipicolinate synthase (290 aa).

Thr44 is a pyruvate binding site. Residue Tyr132 is the Proton donor/acceptor of the active site. Lys160 serves as the catalytic Schiff-base intermediate with substrate. Ile202 contributes to the pyruvate binding site.

Belongs to the DapA family. In terms of assembly, homotetramer; dimer of dimers.

It is found in the cytoplasm. It catalyses the reaction L-aspartate 4-semialdehyde + pyruvate = (2S,4S)-4-hydroxy-2,3,4,5-tetrahydrodipicolinate + H2O + H(+). The protein operates within amino-acid biosynthesis; L-lysine biosynthesis via DAP pathway; (S)-tetrahydrodipicolinate from L-aspartate: step 3/4. Catalyzes the condensation of (S)-aspartate-beta-semialdehyde [(S)-ASA] and pyruvate to 4-hydroxy-tetrahydrodipicolinate (HTPA). This chain is 4-hydroxy-tetrahydrodipicolinate synthase, found in Geobacter metallireducens (strain ATCC 53774 / DSM 7210 / GS-15).